A 384-amino-acid chain; its full sequence is Protein Brevis radix-like 4 (384 aa).

2 disordered regions span residues 1–35 (MLTCIARSKRAGDESSGQPDDPDSKNAKSLTSQLK) and 50–78 (PCTAAQGQGQGQGPIKNNPSSSSVKSDFE). The 56-residue stretch at 150–205 (KEWVAQVEPGVLITFVSLPGGGNDLKRIRFSRDMFNKLQAQRWWADNYDKVMELYN) folds into the BRX 1 domain. 2 disordered regions span residues 214 to 270 (FPLP…DHNS) and 304 to 325 (SIRSSSSRDADRSEEMSVSNAS). Positions 221-235 (RSEDENAKVEYHPED) are enriched in basic and acidic residues. A compositionally biased stretch (polar residues) spans 260 to 270 (YSSSDSLDHNS). The span at 309–318 (SSRDADRSEE) shows a compositional bias: basic and acidic residues. The BRX 2 domain occupies 329-384 (NEWVEQDEPGVYITIKVLPGGKRELRRVRFSRERFGEMHARLWWEENRARIHEQYL).

It belongs to the BRX family. In terms of tissue distribution, expressed in roots.

It is found in the nucleus. This chain is Protein Brevis radix-like 4 (BRXL4), found in Arabidopsis thaliana (Mouse-ear cress).